The sequence spans 239 residues: Ribulose-1,5-bisphosphate 5-phosphatase (239 aa).

Asp-8 acts as the Nucleophile in catalysis. Mg(2+) contacts are provided by Asp-8, Asp-10, and Asp-184. Asp-10 serves as the catalytic Proton donor. A disordered region spans residues Pro-205–Ser-239. Residues Ser-214–Ile-228 are compositionally biased toward basic and acidic residues.

This sequence belongs to the HAD-like hydrolase superfamily. The cofactor is Mg(2+). It depends on Mn(2+) as a cofactor. Co(2+) is required as a cofactor. Ni(2+) serves as cofactor.

The catalysed reaction is D-ribulose 1,5-bisphosphate + H2O = D-ribulose 1-phosphate + phosphate. With respect to regulation, requires both monovalent and divalent ions for optimal activity. Optimal KCl concentration is higher than 2.5 M. Its function is as follows. Phosphatase involved in the non-carboxylating pentose bisphosphate pathway, a nucleoside degradation pathway present in some halophilic archaea. Catalyzes the dephosphorylation of ribulose 1,5-bisphosphate (RuBP) to ribulose 1-phosphate (Ru1P). Shows a strict substrate specificity toward RuBP. This Halopiger xanaduensis (strain DSM 18323 / JCM 14033 / SH-6) protein is Ribulose-1,5-bisphosphate 5-phosphatase.